Here is a 174-residue protein sequence, read N- to C-terminus: Large ribosomal subunit protein uL18 (174 aa).

The protein belongs to the universal ribosomal protein uL18 family. Part of the 50S ribosomal subunit. Contacts the 5S and 23S rRNAs.

Functionally, this is one of the proteins that bind and probably mediate the attachment of the 5S RNA into the large ribosomal subunit, where it forms part of the central protuberance. The sequence is that of Large ribosomal subunit protein uL18 from Methanocorpusculum labreanum (strain ATCC 43576 / DSM 4855 / Z).